The following is a 260-amino-acid chain: Thiazole synthase (260 aa).

Catalysis depends on Lys100, which acts as the Schiff-base intermediate with DXP. Residues Gly161, 187-188 (AG), and 209-210 (NT) contribute to the 1-deoxy-D-xylulose 5-phosphate site.

It belongs to the ThiG family. In terms of assembly, homotetramer. Forms heterodimers with either ThiH or ThiS.

It localises to the cytoplasm. The enzyme catalyses [ThiS sulfur-carrier protein]-C-terminal-Gly-aminoethanethioate + 2-iminoacetate + 1-deoxy-D-xylulose 5-phosphate = [ThiS sulfur-carrier protein]-C-terminal Gly-Gly + 2-[(2R,5Z)-2-carboxy-4-methylthiazol-5(2H)-ylidene]ethyl phosphate + 2 H2O + H(+). Its pathway is cofactor biosynthesis; thiamine diphosphate biosynthesis. Catalyzes the rearrangement of 1-deoxy-D-xylulose 5-phosphate (DXP) to produce the thiazole phosphate moiety of thiamine. Sulfur is provided by the thiocarboxylate moiety of the carrier protein ThiS. In vitro, sulfur can be provided by H(2)S. The chain is Thiazole synthase from Dechloromonas aromatica (strain RCB).